Consider the following 46-residue polypeptide: Myoregulin (46 aa).

Residues 1–21 (MSGKSWVLISTTSPQSLEDEI) are Cytoplasmic-facing. Residues 22 to 42 (LGRLLKILFVLFVDLMSIMYV) traverse the membrane as a helical segment. The Lumenal segment spans residues 43–46 (VITS).

In terms of assembly, homooligomer. Monomer. Interacts with ATP2A1/SERCA1. Interacts as a monomer with ATP2A2/SERCA2; the interaction inhibits ATP2A2 activity. Specifically expressed in all skeletal muscles. Detected in both fast- and slow-type skeletal muscle. Not expressed in cardiac or smooth muscles.

It localises to the sarcoplasmic reticulum membrane. In terms of biological role, inhibits the activity of ATP2A1/SERCA1 ATPase in sarcoplasmic reticulum by decreasing the apparent affinity of the ATPase for Ca(2+), thereby acting as a key regulator of skeletal muscle activity. Its high expression in adult skeletal muscle, suggests that it constitutes the predominant regulator of ATP2A1/SERCA1 in adult skeletal muscle. Also inhibits the activity of ATP2A2/SERCA2 and ATP2A3/SERCA3. This chain is Myoregulin, found in Mus musculus (Mouse).